A 355-amino-acid chain; its full sequence is UDP-N-acetylglucosamine--N-acetylmuramyl-(pentapeptide) pyrophosphoryl-undecaprenol N-acetylglucosamine transferase (355 aa).

UDP-N-acetyl-alpha-D-glucosamine is bound by residues 15–17, Asn127, Arg163, Ser191, Ile244, 263–268, and Gln288; these read TGG and ALTVSE.

This sequence belongs to the glycosyltransferase 28 family. MurG subfamily.

It is found in the cell inner membrane. It carries out the reaction di-trans,octa-cis-undecaprenyl diphospho-N-acetyl-alpha-D-muramoyl-L-alanyl-D-glutamyl-meso-2,6-diaminopimeloyl-D-alanyl-D-alanine + UDP-N-acetyl-alpha-D-glucosamine = di-trans,octa-cis-undecaprenyl diphospho-[N-acetyl-alpha-D-glucosaminyl-(1-&gt;4)]-N-acetyl-alpha-D-muramoyl-L-alanyl-D-glutamyl-meso-2,6-diaminopimeloyl-D-alanyl-D-alanine + UDP + H(+). The protein operates within cell wall biogenesis; peptidoglycan biosynthesis. In terms of biological role, cell wall formation. Catalyzes the transfer of a GlcNAc subunit on undecaprenyl-pyrophosphoryl-MurNAc-pentapeptide (lipid intermediate I) to form undecaprenyl-pyrophosphoryl-MurNAc-(pentapeptide)GlcNAc (lipid intermediate II). The protein is UDP-N-acetylglucosamine--N-acetylmuramyl-(pentapeptide) pyrophosphoryl-undecaprenol N-acetylglucosamine transferase of Escherichia coli O127:H6 (strain E2348/69 / EPEC).